Reading from the N-terminus, the 266-residue chain is Thiazole synthase (266 aa).

The active-site Schiff-base intermediate with DXP is Lys110. 1-deoxy-D-xylulose 5-phosphate is bound by residues Gly171, 197–198 (AG), and 219–220 (AT).

This sequence belongs to the ThiG family. As to quaternary structure, homotetramer. Forms heterodimers with either ThiH or ThiS.

It is found in the cytoplasm. The catalysed reaction is [ThiS sulfur-carrier protein]-C-terminal-Gly-aminoethanethioate + 2-iminoacetate + 1-deoxy-D-xylulose 5-phosphate = [ThiS sulfur-carrier protein]-C-terminal Gly-Gly + 2-[(2R,5Z)-2-carboxy-4-methylthiazol-5(2H)-ylidene]ethyl phosphate + 2 H2O + H(+). The protein operates within cofactor biosynthesis; thiamine diphosphate biosynthesis. Catalyzes the rearrangement of 1-deoxy-D-xylulose 5-phosphate (DXP) to produce the thiazole phosphate moiety of thiamine. Sulfur is provided by the thiocarboxylate moiety of the carrier protein ThiS. In vitro, sulfur can be provided by H(2)S. This Thermobifida fusca (strain YX) protein is Thiazole synthase.